We begin with the raw amino-acid sequence, 598 residues long: MYSISLVVNMQCISAYGSILSLPLRSNLFSVRKLSSFPHKSFSGQHGKLVRMKATPTRACHDQESNRKFKRLPLSKWGHHFLSAQVDVSEMNALAQEIERLKPEVGEMLMFSSKSIESTKKRILFIYMLVSLGVAFHFEDEIEQSLEEGFEKIQEMIAGEDDLYTISIMFWVFRTYGYNMSTDVFKRFKGENEKFMESITSDVKGMVSLYEAAHLRTTREDILEEALSFTTRNLESLARAGASSPHILMRIRNALCMPQHYNAEMIFAREYISFYEQEEDHNKMLLRFAKINFKFLQLNWIQELKTLTKWWKQQDLASKLPPYFRDRLIECYLFAIMIYFEPQFSLGRVSLAKINTVFTLVDDTCDRYGNVSEVAALVQCVERWDPDCMDSLPDYMKTVFKFAWNTFEECENAGIMEEGLSYDVQGALEEWEQGDVVPTFDEYLEIGGVEVTMYVSIACSFLGLGQSSREQAYKWLKSRPKFVEAQAKRARLMNDIAGFEGDMSRGFDVNAIMYYMKQYKVTEEETFTRLQKMARDLDTTVNEEILKTTKSVPRQILKRAIDFGKMIEFTYRSGEEYTHPEGRFKDHITSLFVDLIRL.

Mg(2+)-binding residues include aspartate 362, aspartate 366, asparagine 494, and aspartate 502. A DDXXD motif motif is present at residues 362 to 366 (DDTCD).

Belongs to the terpene synthase family. Tpsa subfamily. Mg(2+) serves as cofactor. It depends on Mn(2+) as a cofactor. As to expression, expressed exclusively in siliques.

The protein localises to the cytoplasm. The protein operates within secondary metabolite biosynthesis; terpenoid biosynthesis. In Arabidopsis thaliana (Mouse-ear cress), this protein is Terpenoid synthase 1 (TPS01).